Reading from the N-terminus, the 240-residue chain is Uridylate kinase (240 aa).

An ATP-binding site is contributed by Lys12–Gly15. The segment at Gly20–Gly25 is involved in allosteric activation by GTP. Gly54 is a UMP binding site. ATP contacts are provided by Gly55 and Arg59. UMP contacts are provided by residues Asp74 and Thr135–Thr142. Tyr168 and Asp171 together coordinate ATP.

This sequence belongs to the UMP kinase family. In terms of assembly, homohexamer.

The protein resides in the cytoplasm. It catalyses the reaction UMP + ATP = UDP + ADP. Its pathway is pyrimidine metabolism; CTP biosynthesis via de novo pathway; UDP from UMP (UMPK route): step 1/1. With respect to regulation, allosterically activated by GTP. Inhibited by UTP. Catalyzes the reversible phosphorylation of UMP to UDP. The protein is Uridylate kinase of Moorella thermoacetica (strain ATCC 39073 / JCM 9320).